Consider the following 96-residue polypeptide: Large ribosomal subunit protein uL23 (96 aa).

Belongs to the universal ribosomal protein uL23 family. As to quaternary structure, part of the 50S ribosomal subunit. Contacts protein L29, and trigger factor when it is bound to the ribosome.

Its function is as follows. One of the early assembly proteins it binds 23S rRNA. One of the proteins that surrounds the polypeptide exit tunnel on the outside of the ribosome. Forms the main docking site for trigger factor binding to the ribosome. This Halalkalibacterium halodurans (strain ATCC BAA-125 / DSM 18197 / FERM 7344 / JCM 9153 / C-125) (Bacillus halodurans) protein is Large ribosomal subunit protein uL23.